A 421-amino-acid polypeptide reads, in one-letter code: MQLLNFGLLLLPFVAGDLAPQPEPLLAGPSDVVPGQYIVTLKEGLTSAQIRDHKKWVSSVHRANLDSFAAGASGVETEGIMKHFHIHDLNMYSGGFDEKTVEDLSRNPYVKSVHPDQHVYLAKTVTQRQARWGLGYMSSKGKPVPLHSTLVDYSYDDKAGEGVWAYVLDTGINVNHVEFEGRGILGHNAIPNKPHTDEFGHGTYVAGIIAGKTYGVAKKANVVSAKAFDTGSSTYNYILETYDWIVRNITDSNRKNKAVINLSISGAKYQPFDDAVEKAFKAGITTVVAAGNDGKDAKNNTPASSPNAITVGAVRWENTRPSFSNYGKLVDIWAPGELIKSCWKGGNNATSTQSGTSAASPHVAGLVAYLMSIENLPSPSAVTARVLNLTIPNLVKDAKDSPNRVAYNGIQERKFTLPKYY.

The N-terminal stretch at 1-16 is a signal peptide; it reads MQLLNFGLLLLPFVAG. Positions 17-122 are excised as a propeptide; sequence DLAPQPEPLL…VHPDQHVYLA (106 aa). The Inhibitor I9 domain occupies 36–122; it reads QYIVTLKEGL…VHPDQHVYLA (87 aa). In terms of domain architecture, Peptidase S8 spans 131–421; the sequence is RWGLGYMSSK…ERKFTLPKYY (291 aa). Active-site charge relay system residues include aspartate 169 and histidine 201. Residues asparagine 248, asparagine 261, and asparagine 348 are each glycosylated (N-linked (GlcNAc...) asparagine). The Charge relay system role is filled by serine 357. An N-linked (GlcNAc...) asparagine glycan is attached at asparagine 388.

Belongs to the peptidase S8 family.

The protein resides in the secreted. In terms of biological role, secreted subtilisin-like serine protease with keratinolytic activity that contributes to pathogenicity. This Arthroderma benhamiae (strain ATCC MYA-4681 / CBS 112371) (Trichophyton mentagrophytes) protein is Subtilisin-like protease 2 (SUB2).